We begin with the raw amino-acid sequence, 120 residues long: MTEKLLHFIRTKSGSMHWWLQRFLAILLAPIILYLLFDVAIYIGQQSDPTVMMFLNRIFNHNSIFIFITSVILIWHVRGGMEVIIEDYVHGEKTRIVSIFLIRVIAIEIMEYLYKCSIIF.

Topologically, residues 1–17 (MTEKLLHFIRTKSGSMH) are mitochondrial matrix. A helical transmembrane segment spans residues 18-38 (WWLQRFLAILLAPIILYLLFD). Residues 39–63 (VAIYIGQQSDPTVMMFLNRIFNHNS) lie on the Mitochondrial intermembrane side of the membrane. The helical transmembrane segment at 64–85 (IFIFITSVILIWHVRGGMEVII) threads the bilayer. Histidine 76 contributes to the heme binding site. Over 86-95 (EDYVHGEKTR) the chain is Mitochondrial matrix. Tyrosine 88 lines the a ubiquinone pocket. Residues 96-120 (IVSIFLIRVIAIEIMEYLYKCSIIF) form a helical membrane-spanning segment.

In terms of assembly, part of an enzyme complex containing four subunits: a flavoprotein, an iron-sulfur protein, plus two membrane-anchoring proteins. Heme serves as cofactor.

It is found in the mitochondrion inner membrane. Its pathway is carbohydrate metabolism; tricarboxylic acid cycle. Membrane-anchoring subunit of succinate dehydrogenase (SDH). The sequence is that of Succinate dehydrogenase membrane anchor subunit (SDH4) from Reclinomonas americana.